A 248-amino-acid chain; its full sequence is Coproheme decarboxylase (248 aa).

Fe-coproporphyrin III-binding positions include Arg-130, Tyr-144, 144–148 (YPMDK), Lys-148, His-171, Gln-184, and Ser-222. The active site involves Tyr-144.

This sequence belongs to the ChdC family. Type 1 subfamily. Homopentamer. The cofactor is Fe-coproporphyrin III.

The enzyme catalyses Fe-coproporphyrin III + 2 H2O2 + 2 H(+) = heme b + 2 CO2 + 4 H2O. The catalysed reaction is Fe-coproporphyrin III + H2O2 + H(+) = harderoheme III + CO2 + 2 H2O. It carries out the reaction harderoheme III + H2O2 + H(+) = heme b + CO2 + 2 H2O. It participates in porphyrin-containing compound metabolism; protoheme biosynthesis. Its function is as follows. Involved in coproporphyrin-dependent heme b biosynthesis. Catalyzes the decarboxylation of Fe-coproporphyrin III (coproheme) to heme b (protoheme IX), the last step of the pathway. The reaction occurs in a stepwise manner with a three-propionate harderoheme intermediate. The sequence is that of Coproheme decarboxylase from Geobacillus stearothermophilus (strain DSM 13240 / CIP 106956 / 10).